The primary structure comprises 378 residues: Putative glutamate--cysteine ligase 2 (378 aa).

This sequence belongs to the glutamate--cysteine ligase type 2 family. YbdK subfamily.

It catalyses the reaction L-cysteine + L-glutamate + ATP = gamma-L-glutamyl-L-cysteine + ADP + phosphate + H(+). ATP-dependent carboxylate-amine ligase which exhibits weak glutamate--cysteine ligase activity. The polypeptide is Putative glutamate--cysteine ligase 2 (Ectopseudomonas mendocina (strain ymp) (Pseudomonas mendocina)).